The sequence spans 202 residues: Shikimate kinase (202 aa).

An ATP-binding site is contributed by Gly20–Thr25. Ser24 contributes to the Mg(2+) binding site. Substrate is bound by residues Asp42, Arg66, and Gly88. Arg126 lines the ATP pocket. Substrate is bound at residue Arg153.

It belongs to the shikimate kinase family. As to quaternary structure, monomer. The cofactor is Mg(2+).

The protein localises to the cytoplasm. It carries out the reaction shikimate + ATP = 3-phosphoshikimate + ADP + H(+). It participates in metabolic intermediate biosynthesis; chorismate biosynthesis; chorismate from D-erythrose 4-phosphate and phosphoenolpyruvate: step 5/7. Functionally, catalyzes the specific phosphorylation of the 3-hydroxyl group of shikimic acid using ATP as a cosubstrate. The sequence is that of Shikimate kinase from Chlorobium luteolum (strain DSM 273 / BCRC 81028 / 2530) (Pelodictyon luteolum).